Reading from the N-terminus, the 400-residue chain is Dual-specificity RNA methyltransferase RlmN (400 aa).

E125 serves as the catalytic Proton acceptor. Residues 131-372 enclose the Radical SAM core domain; it reads ETDRGTLCVS…VRTPRGRDIL (242 aa). A disulfide bond links C138 and C375. 3 residues coordinate [4Fe-4S] cluster: C145, C149, and C152. Residues 201-202, S233, 255-257, and N332 each bind S-adenosyl-L-methionine; these read GE and SLH. Catalysis depends on C375, which acts as the S-methylcysteine intermediate.

It belongs to the radical SAM superfamily. RlmN family. [4Fe-4S] cluster is required as a cofactor.

The protein localises to the cytoplasm. It carries out the reaction adenosine(2503) in 23S rRNA + 2 reduced [2Fe-2S]-[ferredoxin] + 2 S-adenosyl-L-methionine = 2-methyladenosine(2503) in 23S rRNA + 5'-deoxyadenosine + L-methionine + 2 oxidized [2Fe-2S]-[ferredoxin] + S-adenosyl-L-homocysteine. The catalysed reaction is adenosine(37) in tRNA + 2 reduced [2Fe-2S]-[ferredoxin] + 2 S-adenosyl-L-methionine = 2-methyladenosine(37) in tRNA + 5'-deoxyadenosine + L-methionine + 2 oxidized [2Fe-2S]-[ferredoxin] + S-adenosyl-L-homocysteine. Functionally, specifically methylates position 2 of adenine 2503 in 23S rRNA and position 2 of adenine 37 in tRNAs. m2A2503 modification seems to play a crucial role in the proofreading step occurring at the peptidyl transferase center and thus would serve to optimize ribosomal fidelity. The polypeptide is Dual-specificity RNA methyltransferase RlmN (Bradyrhizobium diazoefficiens (strain JCM 10833 / BCRC 13528 / IAM 13628 / NBRC 14792 / USDA 110)).